A 507-amino-acid chain; its full sequence is F-box only protein 31 (507 aa).

The tract at residues 19-42 (RQQRRGPAETAAADSEADTDPEEE) is disordered. S33 is modified (phosphoserine). The segment covering 33–42 (SEADTDPEEE) has biased composition (acidic residues). T37 bears the Phosphothreonine mark. A D box motif is present at residues 50–55 (RCSLLE). Residues 50-96 (RCSLLELPPELLVEIFASLPGTDLPSLAQVCSRFRRILHTDTIWRRR) form the F-box domain. Zn(2+) contacts are provided by C192, H200, C216, and H222. At S264 the chain carries Phosphoserine; by ATM. A DDL motif motif is present at residues 283–285 (DDL). A disordered region spans residues 366–417 (EQEAGEGAAPPREPSAKAADGPPAKDGKEPGGGAEAAEQSASSGQGQPFVLP). Low complexity predominate over residues 400 to 412 (EAAEQSASSGQGQ). S448 carries the post-translational modification Phosphoserine.

This sequence belongs to the FBXO31 family. Part of a SCF (SKP1-cullin-F-box) protein ligase complex SCF(FBXO31) composed of CUL1, SKP1, RBX1 and FBXO31. Interacts (when phosphorylated at Ser-33) with CDC20, promoting ubiquitination by the APC/C complex. Phosphorylation at Ser-264 by ATM following gamma-irradiation results in its stabilization. Phosphorylation at Ser-448 in absence of stress promotes its ubiquitination and degradation by the SCF(FBXO46) complex. Phosphorylation at Ser-33 by AKT1 promotes association with CDC20 and ubiquitination by the APC/C complex. Post-translationally, ubiquitinated by the SCF(FBXO46) complex in absence of stress, promoting its degradation. Ubiquitinated by the APC/C complex following phosphorylation at Ser-33, leading to its degradation by the proteasome.

The protein localises to the cytoplasm. The protein resides in the cytoskeleton. It localises to the microtubule organizing center. Its subcellular location is the centrosome. Its pathway is protein modification; protein ubiquitination. In terms of biological role, substrate-recognition component of the SCF(FBXO31) protein ligase complex, which specifically mediates the ubiquitination of proteins amidated at their C-terminus in response to oxidative stress, leading to their degradation by the proteasome. FBXO31 specifically recognizes and binds C-terminal peptides bearing an amide: C-terminal amidation in response to oxidative stress takes place following protein fragmentation. The SCF(FBXO31) also plays a role in G1 arrest following DNA damage by mediating ubiquitination of phosphorylated cyclin-D1 (CCND1), promoting its degradation by the proteasome, resulting in G1 arrest. The SCF(FBXO31) complex is however not a major regulator of CCND1 stability during the G1/S transition. In response to genotoxic stress, the SCF(FBXO31) complex directs ubiquitination and degradation of phosphorylated MDM2, thereby promoting p53/TP53-mediated DNA damage response. SCF(FBXO31) complex is required for genomic integrity by catalyzing ubiquitination and degradation of cyclin-A (CCNA1 and/or CCNA2) during the G1 phase. In response to genotoxic stress, the SCF(FBXO31) complex directs ubiquitination and degradation of phosphorylated FBXO46 and MAP2K6. SCF(FBXO31) complex promotes ubiquitination and degradation of CDT1 during the G2 phase to prevent re-replication. The SCF(FBXO31) complex also mediates ubiquitination and degradation of DUSP6, OGT and PARD6A. The protein is F-box only protein 31 of Mus musculus (Mouse).